The following is a 61-amino-acid chain: Hepcidin (61 aa).

The segment at 1-24 (LQVLTEEVGSIDSPVGEHQQPGGE) is disordered. Residues 1–34 (LQVLTEEVGSIDSPVGEHQQPGGESMRLPEHFRF) constitute a propeptide that is removed on maturation. 4 disulfides stabilise this stretch: Cys43/Cys59, Cys46/Cys49, Cys47/Xaa55, and Cys50/Cys58.

Belongs to the hepcidin family.

It localises to the secreted. Seems to act as a signaling molecule involved in the maintenance of iron homeostasis. Seems to be required in conjunction with HFE to regulate both intestinal iron absorption and iron storage in macrophages. May also have antimicrobial activity. The polypeptide is Hepcidin (hamp) (Oncorhynchus mykiss (Rainbow trout)).